The following is a 458-amino-acid chain: Monomethylamine methyltransferase MtmB3 (458 aa).

Position 202 (Pyl202) is a non-standard amino acid, pyrrolysine.

This sequence belongs to the monomethylamine methyltransferase family.

It catalyses the reaction Co(I)-[methylamine-specific corrinoid protein] + methylamine + H(+) = methyl-Co(III)-[methylamine-specific corrinoid protein] + NH4(+). The protein operates within one-carbon metabolism; methanogenesis from methylamine. Its function is as follows. Catalyzes the transfer of the methyl group from monomethylamine to the corrinoid cofactor of MtmC. This chain is Monomethylamine methyltransferase MtmB3 (mtmB3), found in Methanosarcina barkeri (strain Fusaro / DSM 804).